Consider the following 370-residue polypeptide: BRISC and BRCA1-A complex member 1 (370 aa).

Disordered stretches follow at residues 1–69 (METT…SPPV) and 90–126 (TTNT…ELHL). A compositionally biased stretch (basic and acidic residues) spans 11-20 (GEERMMDLRP). Over residues 35 to 45 (STGSLNSSLPS) the composition is skewed to low complexity. The segment at 137–340 (VIICLDLSEE…IELHNCMAKL (204 aa)) is VWFA-like.

The protein belongs to the BABAM1 family. In terms of assembly, component of the ARISC complex, at least composed of uimc1/rap80, abraxas1, brcc3/brcc36, babam2 and babam1/nba1. Component of the BRCA1-A complex, at least composed of bard1, uimc1/rap80, abraxas1, brcc3/brcc36, babam2 and babam1/nba1. In the BRCA1-A complex, interacts directly with abraxas1 and babam2. Component of the BRISC complex, at least composed of abraxas2, brcc3/brcc36, babam2 and babam1/nba1.

It localises to the cytoplasm. It is found in the nucleus. Functionally, component of the BRCA1-A complex, a complex that specifically recognizes 'Lys-63'-linked ubiquitinated histones H2A and H2AX at DNA lesion sites. The BRCA1-A complex also possesses deubiquitinase activity that specifically removes 'Lys-63'-linked ubiquitin on histones H2A and H2AX. In the BRCA1-A complex, it is required for the complex integrity and its localization at DNA double-strand breaks (DSBs). Component of the BRISC complex, a multiprotein complex that specifically cleaves 'Lys-63'-linked ubiquitin in various substrates. In these 2 complexes, it is probably required to maintain the stability of babam2 and help the 'Lys-63'-linked deubiquitinase activity mediated by brcc3/brcc36 component. The BRISC complex is required for normal mitotic spindle assembly and microtubule attachment to kinetochores via its role in deubiquitinating numa1. The chain is BRISC and BRCA1-A complex member 1 (babam1) from Danio rerio (Zebrafish).